The following is a 416-amino-acid chain: D-amino acid dehydrogenase (416 aa).

3 to 17 is a binding site for FAD; it reads ITILGSGVIGVTTAY.

Belongs to the DadA oxidoreductase family. It depends on FAD as a cofactor.

The catalysed reaction is a D-alpha-amino acid + A + H2O = a 2-oxocarboxylate + AH2 + NH4(+). The protein operates within amino-acid degradation; D-alanine degradation; NH(3) and pyruvate from D-alanine: step 1/1. Its function is as follows. Oxidative deamination of D-amino acids. This Brucella canis (strain ATCC 23365 / NCTC 10854 / RM-666) protein is D-amino acid dehydrogenase.